A 60-amino-acid chain; its full sequence is uncharacterized protein (60 aa).

Residues 19 to 39 (LSIMCGCSIYFLLLVFILTFY) form a helical membrane-spanning segment.

The protein localises to the membrane. This is an uncharacterized protein from Saccharomyces cerevisiae (strain ATCC 204508 / S288c) (Baker's yeast).